We begin with the raw amino-acid sequence, 711 residues long: Retrovirus-related Pol polyprotein from type-1 retrotransposable element R2 (711 aa).

The 279-residue stretch at leucine 45 to phenylalanine 323 folds into the Reverse transcriptase domain. The interval leucine 444–alanine 711 is nucleic acid-binding endonuclease.

It catalyses the reaction DNA(n) + a 2'-deoxyribonucleoside 5'-triphosphate = DNA(n+1) + diphosphate. The chain is Retrovirus-related Pol polyprotein from type-1 retrotransposable element R2 from Popillia japonica (Japanese beetle).